The sequence spans 260 residues: MPSNCRRFEGKVAIVTAATKGIGLAIAERLLDEGASVVIGSRNQKNVDEAIEYLKNKGLTKVAGIAGHIASTDDQKKLVDFTLQKFGKINILVNNHGINPAFGHILEVSDQVWDKLFEVNVKAGFQMTKLVHPHIAKEGGGAIIFNASYSAYKSPPGIAAYGVTKTTLVGLTRALAMGLAKDNIRVNGIAPGVIKTKMSQVLWDGGEDAEKELTDIQEIALGRLGVPDDCAGTVAYLASDDSSYITGEMIIIAGGVQARL.

An NADP(+)-binding site is contributed by isoleucine 14–valine 38. Serine 148 serves as a coordination point for substrate. Tyrosine 161 serves as the catalytic Proton acceptor. An NADP(+)-binding site is contributed by lysine 165.

This sequence belongs to the short-chain dehydrogenases/reductases (SDR) family.

It carries out the reaction a secondary alcohol + NADP(+) = a ketone + NADPH + H(+). Catalyzes the reduction of isatin, 4-oxonon-2-enal, 9,10-phenanthrenequinone, menadione, 2,3-hexaenadione, 3,4-hexanedione and 2,3-heptanedione. The polypeptide is Dehydrogenase/reductase SDR family member 4 (Caenorhabditis elegans).